The following is a 2214-amino-acid chain: Multifunctional protein URA2 (2214 aa).

Position 2 is an N-acetylalanine (Ala-2). The GATase (Glutamine amidotransferase) stretch occupies residues 2–400 (ATIAPTAPIT…PGPRDTEFLF (399 aa)). L-glutamine is bound by residues Ser-64, Gly-273, and Gly-275. One can recognise a Glutamine amidotransferase type-1 domain in the interval 228-413 (RILAIDVGMK…IQAVKEFKYT (186 aa)). Residue Cys-302 is the Nucleophile; for GATase activity of the active site. Positions 303, 306, 344, 346, and 347 each coordinate L-glutamine. Residues His-386 and Glu-388 each act as for GATase activity in the active site. The tract at residues 401 to 440 (DVFIQAVKEFKYTQVLKPIAFPGGLLEDNVKAHPRIEAKK) is linker. Positions 440-980 (KVLVLGSGGL…DSHDLSFDDH (541 aa)) are CPSase A. A CPSase (Carbamoyl phosphate synthase) region spans residues 440–1482 (KVLVLGSGGL…TNVKCAKLLI (1043 aa)). ATP-binding residues include Arg-558, Arg-598, Gly-604, Gly-605, Lys-635, Met-637, Glu-642, Gly-668, Ile-669, His-670, Gln-711, and Glu-725. ATP-grasp domains follow at residues 562 to 754 (SNAI…KLGL) and 1099 to 1290 (SRML…KAIM). Positions 711, 725, and 727 each coordinate Mg(2+). Gln-711, Glu-725, and Asn-727 together coordinate Mn(2+). Residues 981-1482 (GVMVLGSGVY…TNVKCAKLLI (502 aa)) form a CPSase B region. ATP contacts are provided by Arg-1135, Lys-1174, Ile-1176, Glu-1181, Gly-1206, Val-1207, His-1208, Ser-1209, Gln-1249, and Glu-1261. Mg(2+)-binding residues include Gln-1249, Glu-1261, and Asn-1263. Gln-1249, Glu-1261, and Asn-1263 together coordinate Mn(2+). In terms of domain architecture, MGS-like spans 1356–1508 (FKLPKKNILL…QTSHRTITLP (153 aa)). The segment at 1483–1492 (EAISRNITLD) is linker. Residues 1493 to 1821 (VSERDAQTSH…YNGETLVLSG (329 aa)) form a defective DHOase domain region. The tract at residues 1822–1909 (ELVSPGAKGK…NLIRSNNPFR (88 aa)) is linker. A Glycyl lysine isopeptide (Lys-Gly) (interchain with G-Cter in ubiquitin) cross-link involves residue Lys-1853. Phosphoserine; by PKA is present on Ser-1857. Residues 1910–2214 (GRHILSIKQF…LLAMVMGVDM (305 aa)) form an ATCase (Aspartate transcarbamylase) region. 2 residues coordinate carbamoyl phosphate: Arg-1962 and Thr-1963. Position 1990 (Lys-1990) interacts with L-aspartate. Residues Arg-2011, His-2039, and Gln-2042 each coordinate carbamoyl phosphate. L-aspartate is bound by residues Arg-2072 and Arg-2134. Residues Leu-2173 and Pro-2174 each contribute to the carbamoyl phosphate site.

This sequence in the N-terminal section; belongs to the CarA family. The protein in the 2nd section; belongs to the CarB family. In the 3rd section; belongs to the metallo-dependent hydrolases superfamily. DHOase family. CAD subfamily. It in the C-terminal section; belongs to the aspartate/ornithine carbamoyltransferase superfamily. ATCase family. Requires Mg(2+) as cofactor. The cofactor is Mn(2+).

The protein localises to the cytoplasm. The catalysed reaction is hydrogencarbonate + L-glutamine + 2 ATP + H2O = carbamoyl phosphate + L-glutamate + 2 ADP + phosphate + 2 H(+). It catalyses the reaction L-glutamine + H2O = L-glutamate + NH4(+). The enzyme catalyses hydrogencarbonate + NH4(+) + 2 ATP = carbamoyl phosphate + 2 ADP + phosphate + 2 H(+). It carries out the reaction carbamoyl phosphate + L-aspartate = N-carbamoyl-L-aspartate + phosphate + H(+). It functions in the pathway pyrimidine metabolism; UMP biosynthesis via de novo pathway; (S)-dihydroorotate from bicarbonate: step 1/3. It participates in pyrimidine metabolism; UMP biosynthesis via de novo pathway; (S)-dihydroorotate from bicarbonate: step 2/3. With respect to regulation, both CPSase and ATCase activities are feedback inhibited by the end product UTP. Functionally, multifunctional protein that encodes the first 2 enzymatic activities of the de novo pyrimidine pathway: carbamoylphosphate synthetase (CPSase; EC 6.3.5.5) and aspartate transcarbamylase (ATCase; EC 2.1.3.2). The CPSase-function is accomplished in 2 steps, by a glutamine-dependent amidotransferase activity (GATase) that binds and cleaves glutamine to produce ammonia, followed by an ammonium-dependent carbamoyl phosphate synthetase, which reacts with the ammonia, hydrogencarbonate and ATP to form carbamoyl phosphate. The endogenously produced carbamoyl phosphate is sequestered and channeled to the ATCase active site. ATCase then catalyzes the formation of carbamoyl-L-aspartate from L-aspartate and carbamoyl phosphate. This chain is Multifunctional protein URA2 (URA2), found in Saccharomyces cerevisiae (strain ATCC 204508 / S288c) (Baker's yeast).